We begin with the raw amino-acid sequence, 721 residues long: Pentatricopeptide repeat-containing protein At3g49710 (721 aa).

14 PPR repeats span residues 42-72 (STYL…TEEP), 73-103 (NVFS…IPQP), 104-138 (DTVS…GFEV), 139-169 (DGFT…SGGF), 172-202 (YSSV…MDEL), 204-238 (DEVS…GFKI), 239-273 (DMFT…GFHQ), 274-307 (NSHV…ILSP), 308-343 (DLVV…GHRP), 344-378 (DDCS…HIPS), 380-410 (RISV…MPEL), 411-445 (NAVS…GIAP), 446-476 (NKIT…MKET), and 482-512 (EAEH…MPYK). Residues 517–592 (AWAALLGACR…KPGCSWIEVK (76 aa)) are type E motif. The tract at residues 593 to 623 (KKKHVFVAEDWSHPMIREVNEYLEEMMKKMK) is type E(+) motif. The interval 624–721 (KVGYVMDKKW…DGKCSCGDYW (98 aa)) is type DYW motif.

It belongs to the PPR family. PCMP-H subfamily.

This Arabidopsis thaliana (Mouse-ear cress) protein is Pentatricopeptide repeat-containing protein At3g49710 (PCMP-H79).